A 650-amino-acid polypeptide reads, in one-letter code: Acetyl-coenzyme A synthetase (650 aa).

Residues arginine 191–arginine 194, threonine 311, and asparagine 335 contribute to the CoA site. ATP contacts are provided by residues glycine 387–proline 389, aspartate 411–threonine 416, aspartate 500, and arginine 515. Serine 523 serves as a coordination point for CoA. Arginine 526 lines the ATP pocket. Positions 537, 539, and 542 each coordinate Mg(2+). Arginine 584 is a binding site for CoA. Lysine 609 bears the N6-acetyllysine mark.

The protein belongs to the ATP-dependent AMP-binding enzyme family. Mg(2+) is required as a cofactor. Post-translationally, acetylated. Deacetylation by the SIR2-homolog deacetylase activates the enzyme.

It carries out the reaction acetate + ATP + CoA = acetyl-CoA + AMP + diphosphate. Functionally, catalyzes the conversion of acetate into acetyl-CoA (AcCoA), an essential intermediate at the junction of anabolic and catabolic pathways. AcsA undergoes a two-step reaction. In the first half reaction, AcsA combines acetate with ATP to form acetyl-adenylate (AcAMP) intermediate. In the second half reaction, it can then transfer the acetyl group from AcAMP to the sulfhydryl group of CoA, forming the product AcCoA. The protein is Acetyl-coenzyme A synthetase of Shewanella sp. (strain MR-7).